We begin with the raw amino-acid sequence, 882 residues long: DNA mismatch repair protein MutS (882 aa).

An ATP-binding site is contributed by 656–663 (GPNASGKS).

The protein belongs to the DNA mismatch repair MutS family.

Functionally, this protein is involved in the repair of mismatches in DNA. It is possible that it carries out the mismatch recognition step. This protein has a weak ATPase activity. The chain is DNA mismatch repair protein MutS from Synechococcus sp. (strain ATCC 27144 / PCC 6301 / SAUG 1402/1) (Anacystis nidulans).